The primary structure comprises 95 residues: Integration host factor subunit beta (95 aa).

The interval 59–95 (RVGRNPKTGQSVRLDGKFVPHFKPGKELRDRVNEDES) is disordered. The span at 72-95 (LDGKFVPHFKPGKELRDRVNEDES) shows a compositional bias: basic and acidic residues.

Belongs to the bacterial histone-like protein family. In terms of assembly, heterodimer of an alpha and a beta chain.

Functionally, this protein is one of the two subunits of integration host factor, a specific DNA-binding protein that functions in genetic recombination as well as in transcriptional and translational control. The chain is Integration host factor subunit beta from Ectopseudomonas mendocina (strain ymp) (Pseudomonas mendocina).